Consider the following 713-residue polypeptide: Polyribonucleotide nucleotidyltransferase (713 aa).

Asp493 and Asp499 together coordinate Mg(2+). Residues 560–619 (PRMITIKINPEKIRDVIGKGGSVIRALTEETGTTIDISDDGVVTIASTNSEGMAEAKKRI) enclose the KH domain. The region spanning 629 to 697 (GHVYEGTVLK…EKGRVRLSAK (69 aa)) is the S1 motif domain.

Belongs to the polyribonucleotide nucleotidyltransferase family. Mg(2+) serves as cofactor.

It localises to the cytoplasm. It catalyses the reaction RNA(n+1) + phosphate = RNA(n) + a ribonucleoside 5'-diphosphate. Involved in mRNA degradation. Catalyzes the phosphorolysis of single-stranded polyribonucleotides processively in the 3'- to 5'-direction. The protein is Polyribonucleotide nucleotidyltransferase of Burkholderia pseudomallei (strain 1106a).